Consider the following 358-residue polypeptide: Histidinol-phosphate aminotransferase (358 aa).

Lys-211 bears the N6-(pyridoxal phosphate)lysine mark.

Belongs to the class-II pyridoxal-phosphate-dependent aminotransferase family. Histidinol-phosphate aminotransferase subfamily. Homodimer. Pyridoxal 5'-phosphate serves as cofactor.

It carries out the reaction L-histidinol phosphate + 2-oxoglutarate = 3-(imidazol-4-yl)-2-oxopropyl phosphate + L-glutamate. Its pathway is amino-acid biosynthesis; L-histidine biosynthesis; L-histidine from 5-phospho-alpha-D-ribose 1-diphosphate: step 7/9. This Blochmanniella pennsylvanica (strain BPEN) protein is Histidinol-phosphate aminotransferase.